The following is a 132-amino-acid chain: Small ribosomal subunit protein eS17B (132 aa).

Phosphoserine is present on Ser-43.

Belongs to the eukaryotic ribosomal protein eS17 family. As to quaternary structure, component of the small ribosomal subunit (SSU). Mature yeast ribosomes consist of a small (40S) and a large (60S) subunit. The 40S small subunit contains 1 molecule of ribosomal RNA (18S rRNA) and at least 33 different proteins. The large 60S subunit contains 3 rRNA molecules (25S, 5.8S and 5S rRNA) and at least 46 different proteins.

It is found in the cytoplasm. Component of the ribosome, a large ribonucleoprotein complex responsible for the synthesis of proteins in the cell. The small ribosomal subunit (SSU) binds messenger RNAs (mRNAs) and translates the encoded message by selecting cognate aminoacyl-transfer RNA (tRNA) molecules. The large subunit (LSU) contains the ribosomal catalytic site termed the peptidyl transferase center (PTC), which catalyzes the formation of peptide bonds, thereby polymerizing the amino acids delivered by tRNAs into a polypeptide chain. The nascent polypeptides leave the ribosome through a tunnel in the LSU and interact with protein factors that function in enzymatic processing, targeting, and the membrane insertion of nascent chains at the exit of the ribosomal tunnel. This Schizosaccharomyces pombe (strain 972 / ATCC 24843) (Fission yeast) protein is Small ribosomal subunit protein eS17B (rps1702).